Here is a 136-residue protein sequence, read N- to C-terminus: MAISYQLKSPAFRGLGRRKSSVARVILLKGSGKFTINKREAKEYLKSDIYIKDALQPFDLTQTNNTFDIRVTVRGGGLAGQAGAIRLGIARALLEISADYRSVLKEAKMLTRNTKVKERKKPGLRKARKARQFSKR.

The interval 115–136 (KVKERKKPGLRKARKARQFSKR) is disordered. The segment covering 117–136 (KERKKPGLRKARKARQFSKR) has biased composition (basic residues).

Belongs to the universal ribosomal protein uS9 family.

The polypeptide is Small ribosomal subunit protein uS9 (Mycoplasmopsis pulmonis (strain UAB CTIP) (Mycoplasma pulmonis)).